Reading from the N-terminus, the 392-residue chain is Iripin-1 (392 aa).

The N-terminal stretch at 1–16 (MKPLVPLLFLLVSCRA) is a signal peptide. N-linked (GlcNAc...) asparagine glycosylation is found at Asn104, Asn196, and Asn265.

It belongs to the serpin family. In terms of assembly, interacts with human KLKB1. Interacts with human ST14. Interacts with human PLG (plasmin). Highly expressed in salivary gland. Expressed in midgut and ovary.

Its subcellular location is the secreted. Its function is as follows. Serine protease inhibitor that modulates blood feeding of ticks on vertebrate species. Modestly inhibits human trypsin, plasma kallikrein (KLKB1), matriptase (ST14) and plasmin (PLG) via a classic serpin inhibitory mechanism. Modestly reduces enzymatic activity of human alpha-chymotrypsin, coagulation factor Xa (F10), factor XIIa (F12), cathepsin G (CTSG), tPA/tissue-type plasminogen activator (PLAT) and uPA/urokinase-type plasminogen activator (PLAU). Probably acts as a substrate rather than an inhibitor for the human neutrophil elastase (ELANE) and thus reduces its enzymatic activity in in vitro assays. Decreases expression of adhesion molecules VCAM1 and CD99 on the surface of human cells. Increases the production of chemokines for neutrophils and monocytes, such as KC/CXCL1, MIP-2/CXCL2 and MIP-1/CCL2, and anti-inflammatory cytokine IL10 in mouse inflammation models. Reduces the recruitment of mouse neutrophils and monocytes to the site of inflammation. Decreases expression of CXCR2 on the surface of mouse neutrophils. Increases expression of integrin ITGAM/ITGB2 on the surface of mouse neutrophils. The sequence is that of Iripin-1 from Ixodes ricinus (Common tick).